Reading from the N-terminus, the 462-residue chain is Glycoprotein endo-alpha-1,2-mannosidase (462 aa).

The Cytoplasmic segment spans residues methionine 1–cysteine 9. The chain crosses the membrane as a helical; Signal-anchor for type II membrane protein span at residues isoleucine 10–tryptophan 30. Topologically, residues proline 31 to serine 462 are lumenal. The tract at residues aspartate 60–serine 462 is catalytic.

This sequence belongs to the glycosyl hydrolase 99 family. In terms of processing, undergoes proteolytic cleavage in the C-terminal region. As to expression, highly expressed in the liver and kidney.

It localises to the golgi apparatus membrane. It carries out the reaction N-{alpha-Glc-(1-&gt;3)-alpha-Man-(1-&gt;2)-alpha-Man-(1-&gt;2)-alpha-Man-(1-&gt;3)-[alpha-Man-(1-&gt;2)-alpha-Man-(1-&gt;3)-[alpha-Man-(1-&gt;2)-alpha-Man-(1-&gt;6)]-alpha-Man-(1-&gt;6)]-beta-Man-(1-&gt;4)-beta-GlcNAc-(1-&gt;4)-beta-GlcNAc}-L-asparaginyl-[protein] + H2O = alpha-D-glucosyl-(1-&gt;3)-D-mannopyranose + N(4)-{alpha-D-Man-(1-&gt;2)-alpha-D-Man-(1-&gt;3)-[alpha-D-Man-(1-&gt;2)-alpha-D-Man-(1-&gt;3)-[alpha-D-Man-(1-&gt;2)-alpha-D-Man-(1-&gt;6)]-alpha-D-Man-(1-&gt;6)]-beta-D-Man-(1-&gt;4)-beta-D-GlaNAc-(1-&gt;4)-beta-D-GlcNAc}-L-asparaginyl-[protein] (N-glucan mannose isomer 8A1,2,3B1,2). In Rattus norvegicus (Rat), this protein is Glycoprotein endo-alpha-1,2-mannosidase (Manea).